Here is a 904-residue protein sequence, read N- to C-terminus: Protein translocase subunit SecA (904 aa).

Residues Q87, 105-109, and D512 contribute to the ATP site; that span reads GEGKT. A disordered region spans residues 851–870; sequence LARQQQLSHQTDNSALMSEE. Residues C888, C890, C899, and H900 each contribute to the Zn(2+) site.

The protein belongs to the SecA family. As to quaternary structure, monomer and homodimer. Part of the essential Sec protein translocation apparatus which comprises SecA, SecYEG and auxiliary proteins SecDF-YajC and YidC. Zn(2+) serves as cofactor.

It is found in the cell inner membrane. Its subcellular location is the cytoplasm. The catalysed reaction is ATP + H2O + cellular proteinSide 1 = ADP + phosphate + cellular proteinSide 2.. Its function is as follows. Part of the Sec protein translocase complex. Interacts with the SecYEG preprotein conducting channel. Has a central role in coupling the hydrolysis of ATP to the transfer of proteins into and across the cell membrane, serving both as a receptor for the preprotein-SecB complex and as an ATP-driven molecular motor driving the stepwise translocation of polypeptide chains across the membrane. The chain is Protein translocase subunit SecA from Yersinia pseudotuberculosis serotype O:1b (strain IP 31758).